The primary structure comprises 116 residues: Putative antiporter subunit mnhC2 (116 aa).

3 helical membrane-spanning segments follow: residues L3–L23, I28–H48, and A72–V92.

Belongs to the CPA3 antiporters (TC 2.A.63) subunit C family. May form a heterooligomeric complex that consists of seven subunits: mnhA2, mnhB2, mnhC2, mnhD2, mnhE2, mnhF2 and mnhG2.

It is found in the cell membrane. The polypeptide is Putative antiporter subunit mnhC2 (mnhC2) (Staphylococcus haemolyticus (strain JCSC1435)).